The chain runs to 327 residues: 2-oxoglutarate-dependent dioxygenase traH (327 aa).

The Fe2OG dioxygenase domain occupies 183–290 (TTDAAMFLKL…YAVPAFWHGD (108 aa)). Fe cation contacts are provided by His211, Asp213, and His270. 2-oxoglutarate is bound at residue Arg280.

This sequence belongs to the iron/ascorbate-dependent oxidoreductase family. Fe(2+) is required as a cofactor.

It functions in the pathway secondary metabolite biosynthesis. In terms of biological role, 2-oxoglutarate-dependent dioxygenase; part of the tra gene cluster that produces terrestric acid. The clavatol biosynthesis cluster cla and the terrestric acid cluster tra are both involved in the production of peniphenones and penilactones. The non-reducing PKS claF is responsible for the formation of clavatol from successive condensations of 3 malonyl-CoA units, presumably with a simple acetyl-CoA starter unit, and 2 methylation steps. The esterase claE probably collaborates with claF by catalyzing the hydrolysis of ACP-bound acyl intermediates to free the ACP from stalled intermediates. The clavatol oxidase claD then converts clavatol to hydroxyclavatol. Spontaneous dehydration of hydroxyclavatol leads to the accumulation of the highly active ortho-quinone methide. On the other hand, the PKS-NRPS hybrid traA is involved in the formation of crustosic acid, with the help of traB and traD. The polyketide synthase module (PKS) of traA is responsible for the synthesis of the polyketide backbone via the condensation of an acetyl-CoA starter unit with 3 malonyl-CoA units. The downstream nonribosomal peptide synthetase (NRPS) module then amidates the carboxyl end of the polyketide with L-malic acid. Because traA lacks a designated enoylreductase (ER) domain, the required activity is provided the enoyl reductase traG. Crustosic acid undergoes decarboxylation and isomerization to the terrestric acid, catalyzed by the 2-oxoglutarate-dependent dioxygenase traH. Both acids are further converted to the 2 gamma-butyrolactones (R)-5-methyltetronic acid and (S)-5-carboxylmethyltetronic acid, with involvement of the cytochrome P450 monooxygenase claJ. Spontaneous addition of the methide to these gamma-butyrolactones leads to peniphenone D and penilactone D, which undergo again stereospecific attacking by methide to give penilactones A and B. This is 2-oxoglutarate-dependent dioxygenase traH from Penicillium crustosum (Blue mold fungus).